Here is a 235-residue protein sequence, read N- to C-terminus: Phosphoribosylaminoimidazole-succinocarboxamide synthase (235 aa).

It belongs to the SAICAR synthetase family.

The catalysed reaction is 5-amino-1-(5-phospho-D-ribosyl)imidazole-4-carboxylate + L-aspartate + ATP = (2S)-2-[5-amino-1-(5-phospho-beta-D-ribosyl)imidazole-4-carboxamido]succinate + ADP + phosphate + 2 H(+). It functions in the pathway purine metabolism; IMP biosynthesis via de novo pathway; 5-amino-1-(5-phospho-D-ribosyl)imidazole-4-carboxamide from 5-amino-1-(5-phospho-D-ribosyl)imidazole-4-carboxylate: step 1/2. This chain is Phosphoribosylaminoimidazole-succinocarboxamide synthase, found in Clostridium kluyveri (strain NBRC 12016).